Consider the following 538-residue polypeptide: RNA-binding protein Ro60 (538 aa).

Met1 is subject to N-acetylmethionine. A phosphoserine mark is found at Ser4 and Ser19. Residues 16–369 (VVNSEGGCVW…TFKTVEPTGK (354 aa)) enclose the TROVE domain. The RNA-binding stretch occupies residues 120–284 (RIPTHLFTFI…EMPLTALLRN (165 aa)). Lys224 is modified (N6-acetyllysine). A VWFA-like domain region spans residues 361-538 (FKTVEPTGKR…VIRNFTLDVI (178 aa)). A divalent metal cation-binding residues include Ser378, Ser380, and Thr445.

This sequence belongs to the Ro 60 kDa family. In terms of assembly, identified in a IGF2BP1-dependent mRNP granule complex containing untranslated mRNAs. Found in a complex with PUF60 and Y5 RNA. Interacts with RAB11FIP5. In terms of tissue distribution, highest in brain, followed by lung, muscle, kidney and heart. Lower levels are found in testis, liver and spleen.

Its subcellular location is the cytoplasm. Functionally, RNA-binding protein that binds to misfolded non-coding RNAs, pre-5S rRNA, and several small cytoplasmic RNA molecules known as Y RNAs. May play roles in cilia formation and/or maintenance. This chain is RNA-binding protein Ro60, found in Mus musculus (Mouse).